A 341-amino-acid polypeptide reads, in one-letter code: tRNA N6-adenosine threonylcarbamoyltransferase (341 aa).

Positions 111 and 115 each coordinate Fe cation. Residues A133 to G137, D166, G179, D183, and N273 contribute to the substrate site. D301 is a binding site for Fe cation.

This sequence belongs to the KAE1 / TsaD family. Requires Fe(2+) as cofactor.

It is found in the cytoplasm. The enzyme catalyses L-threonylcarbamoyladenylate + adenosine(37) in tRNA = N(6)-L-threonylcarbamoyladenosine(37) in tRNA + AMP + H(+). Required for the formation of a threonylcarbamoyl group on adenosine at position 37 (t(6)A37) in tRNAs that read codons beginning with adenine. Is involved in the transfer of the threonylcarbamoyl moiety of threonylcarbamoyl-AMP (TC-AMP) to the N6 group of A37, together with TsaE and TsaB. TsaD likely plays a direct catalytic role in this reaction. The protein is tRNA N6-adenosine threonylcarbamoyltransferase of Geotalea daltonii (strain DSM 22248 / JCM 15807 / FRC-32) (Geobacter daltonii).